The following is a 454-amino-acid chain: tRNA modification GTPase MnmE (454 aa).

3 residues coordinate (6S)-5-formyl-5,6,7,8-tetrahydrofolate: Arg23, Glu80, and Lys120. Residues 216–377 (GMKVVIAGRP…LRNHLKQSMG (162 aa)) form the TrmE-type G domain. Asn226 serves as a coordination point for K(+). GTP contacts are provided by residues 226-231 (NAGKSS), 245-251 (TDIAGTT), 270-273 (DTAG), 335-338 (NKAD), and 358-360 (SAR). Ser230 provides a ligand contact to Mg(2+). Residues Thr245, Ile247, and Thr250 each coordinate K(+). Residue Thr251 participates in Mg(2+) binding. Lys454 provides a ligand contact to (6S)-5-formyl-5,6,7,8-tetrahydrofolate.

It belongs to the TRAFAC class TrmE-Era-EngA-EngB-Septin-like GTPase superfamily. TrmE GTPase family. Homodimer. Heterotetramer of two MnmE and two MnmG subunits. K(+) serves as cofactor.

It localises to the cytoplasm. Its function is as follows. Exhibits a very high intrinsic GTPase hydrolysis rate. Involved in the addition of a carboxymethylaminomethyl (cmnm) group at the wobble position (U34) of certain tRNAs, forming tRNA-cmnm(5)s(2)U34. This chain is tRNA modification GTPase MnmE, found in Shigella boydii serotype 18 (strain CDC 3083-94 / BS512).